Here is a 669-residue protein sequence, read N- to C-terminus: MQAIQDEIKQLTDELNQHNYRYYVDDAPSIPDAEYDRLMRRLQELEAEHPELALADSPTQRVGGEALSKFNQVTHLKPMLSLDNVFSEEEFNAFYKRVGDKLPDTPAFCCEPKLDGLAVSILYRDGVFERAATRGDGTVGEDITENVRTIKSVPLRLRGSGFPPLLEVRGEVFMPKAAFEAVNDKARAKGEKLFVNPRNAAAGSLRQLDSKITASRSLAFYAYALGVVEPETWPLAASHFEQLVQLKEWGCPVSSEVKVCADIPSVLAYYQDILTRRSELAYEIDGVVLKVNDIAQQQTLGFVAKAPRWATAYKFPAQEEITQLEGVDFQVGRTGAVTPVARLQPVFVGGVTVSNATLHNADEIARLGVMIGDSVIIRRAGDVIPQVVAVVPEKRPSDAQAIQFPPQCPVCGSDVERVEGEAVARCTGGLVCEAQRKEAIKHFASRKALDIDGMGDKVVEQLIDKELVASPADLFKLTASAITMLDRMGMKSATNLVNALEAAKQTTFARFLYSLGIREVGEATAANLANYFKTLEHLKQADAETFMKVDDVGVIVAQHLVHFFEQPHNLEVIDGLLQAGVHWPDIEEVAEEALSLKGQTWVLTGTLTQLNRNDAKAKLQALGAKVAGSVSKNTDCLVAGEAAGSKLTKAQELGVKVIDEAELLAILGS.

NAD(+) contacts are provided by residues 32 to 36 (DAEYD), 81 to 82 (SL), and Glu-111. Residue Lys-113 is the N6-AMP-lysine intermediate of the active site. 4 residues coordinate NAD(+): Arg-134, Glu-171, Lys-290, and Lys-314. Zn(2+)-binding residues include Cys-408, Cys-411, Cys-426, and Cys-432. Positions 591–669 (EEALSLKGQT…EAELLAILGS (79 aa)) constitute a BRCT domain.

It belongs to the NAD-dependent DNA ligase family. LigA subfamily. Mg(2+) serves as cofactor. Mn(2+) is required as a cofactor.

The enzyme catalyses NAD(+) + (deoxyribonucleotide)n-3'-hydroxyl + 5'-phospho-(deoxyribonucleotide)m = (deoxyribonucleotide)n+m + AMP + beta-nicotinamide D-nucleotide.. Its function is as follows. DNA ligase that catalyzes the formation of phosphodiester linkages between 5'-phosphoryl and 3'-hydroxyl groups in double-stranded DNA using NAD as a coenzyme and as the energy source for the reaction. It is essential for DNA replication and repair of damaged DNA. The chain is DNA ligase from Shewanella loihica (strain ATCC BAA-1088 / PV-4).